Here is a 162-residue protein sequence, read N- to C-terminus: CASP-like protein BLE3 (162 aa).

At 1 to 7 (MAKVHRL) the chain is on the cytoplasmic side. A helical membrane pass occupies residues 8–28 (MNAVLRLAAAAAAATAAVVMV). Residues 29–50 (TSRETTSFFGIQMEAKYSYTPS) are Extracellular-facing. A helical transmembrane segment spans residues 51 to 71 (FIFFVVAYAVAAAYSLLVLAV). At 72–85 (PAGSALSRLALTTD) the chain is on the cytoplasmic side. A helical membrane pass occupies residues 86-106 (VVLGMVLAGAVASAGAISDIA). Residues 107–128 (KNGNSHAGWLPVCGQIHAYCNH) are Extracellular-facing. A helical transmembrane segment spans residues 129–149 (VMAALIAGFVALAVHFVVVMY). The Cytoplasmic portion of the chain corresponds to 150–162 (SLHIVTDVICPCH).

It belongs to the Casparian strip membrane proteins (CASP) family. As to quaternary structure, homodimer and heterodimers.

The protein resides in the cell membrane. In terms of biological role, involved in cell elongation in rice through dual regulation by brassinolide and auxin. The chain is CASP-like protein BLE3 (BLE3) from Oryza sativa subsp. indica (Rice).